We begin with the raw amino-acid sequence, 395 residues long: Cysteine synthase 2 (395 aa).

Residues 6–22 (QDLASGIAMGAVFMYLL) form a helical membrane-spanning segment. N6-(pyridoxal phosphate)lysine is present on Lys-83. Residues 228-232 (GTGGT) and Ser-335 contribute to the pyridoxal 5'-phosphate site.

This sequence belongs to the cysteine synthase/cystathionine beta-synthase family. Pyridoxal 5'-phosphate serves as cofactor.

The protein resides in the mitochondrion. Its subcellular location is the mitochondrion outer membrane. The enzyme catalyses O-acetyl-L-serine + hydrogen sulfide = L-cysteine + acetate. Its function is as follows. Putative cysteine synthase that catalyzes the conversion of O-acetyl-L-serine (OAS) into cysteine, the last step in the cysteine biosynthesis pathway. However, in contrast to cysteine synthase cys11, this CS-like protein seems not to function in cysteine biosynthesis, at least under normal growth conditions, although the transcript is produced. In Schizosaccharomyces pombe (strain 972 / ATCC 24843) (Fission yeast), this protein is Cysteine synthase 2 (cys12).